Reading from the N-terminus, the 501-residue chain is Endonuclease domain-containing 1 protein (501 aa).

Positions Met-1–Ala-21 are cleaved as a signal peptide. Lys-408 carries the N6-acetyllysine modification.

This sequence belongs to the DNA/RNA non-specific endonuclease family. In terms of assembly, interacts with RNF26; this interaction is important to modulate innate immune signaling through the cGAS-STING pathway.

It localises to the secreted. May act as a DNase and a RNase. Plays a role in the modulation of innate immune signaling through the cGAS-STING pathway by interacting with RNF26. This Mus musculus (Mouse) protein is Endonuclease domain-containing 1 protein (Endod1).